The following is a 319-amino-acid chain: Ankyrin repeat domain-containing protein 1 (319 aa).

Positions 55–89 (LGEEQRKSEKVREAELKKKKLEQRSKLENLEDLEI) form a coiled coil. ANK repeat units follow at residues 152-181 (YKRTALHRACLEGHLAIVEKLMEAGAQIEF), 185-214 (LESTAIHWACRGGNLDVLKLLLNKGAKISA), 218-247 (LLSTALHVAVRTGHYECAEHLIACEADLNA), 251-280 (EGDTPLHDAVRLNRYKMIRLLMTFGADLNV), and 284-315 (AGKTPMDLVLHWQNGTKAIFDSLKENAYKNSR).

In terms of assembly, interacts with TTN/titin. Interacts with YBX1. In terms of tissue distribution, expressed in heart, cardiac muscle.

The protein resides in the nucleus. Functionally, may play an important role in endothelial cell activation. May act as a nuclear transcription factor that negatively regulates the expression of cardiac genes. This is Ankyrin repeat domain-containing protein 1 (Ankrd1) from Rattus norvegicus (Rat).